A 208-amino-acid chain; its full sequence is MVQRSKSSANWLREHFNDPFVKQAQKDGYRSRASYKLLEIQEKDRLIRPGMSVIDLGAAPGGWSQVTSRLIGGQGRLIASDILEMDSIADVTFIQGDFTHDEVLQRILEAVGDSHVDLVISDMAPNMSGTPAVDIPRAMFLCELALDLATRVLKPGGDFLIKIFQGEGFDVYLKDVRSKFDKVQMRKPSSSRDRSREQYLLGRGFKGA.

Residues Gly61, Trp63, Asp81, Asp97, and Asp122 each contribute to the S-adenosyl-L-methionine site. Residue Lys162 is the Proton acceptor of the active site.

It belongs to the class I-like SAM-binding methyltransferase superfamily. RNA methyltransferase RlmE family.

The protein resides in the cytoplasm. The catalysed reaction is uridine(2552) in 23S rRNA + S-adenosyl-L-methionine = 2'-O-methyluridine(2552) in 23S rRNA + S-adenosyl-L-homocysteine + H(+). In terms of biological role, specifically methylates the uridine in position 2552 of 23S rRNA at the 2'-O position of the ribose in the fully assembled 50S ribosomal subunit. The protein is Ribosomal RNA large subunit methyltransferase E of Pseudomonas putida (strain GB-1).